A 102-amino-acid polypeptide reads, in one-letter code: Small ribosomal subunit protein uS10 (102 aa).

The protein belongs to the universal ribosomal protein uS10 family. Part of the 30S ribosomal subunit.

Involved in the binding of tRNA to the ribosomes. This chain is Small ribosomal subunit protein uS10, found in Chlorobium phaeobacteroides (strain BS1).